Reading from the N-terminus, the 872-residue chain is Alanine--tRNA ligase (872 aa).

Residues H567, H571, C669, and H673 each coordinate Zn(2+).

This sequence belongs to the class-II aminoacyl-tRNA synthetase family. It depends on Zn(2+) as a cofactor.

The protein localises to the cytoplasm. The enzyme catalyses tRNA(Ala) + L-alanine + ATP = L-alanyl-tRNA(Ala) + AMP + diphosphate. Functionally, catalyzes the attachment of alanine to tRNA(Ala) in a two-step reaction: alanine is first activated by ATP to form Ala-AMP and then transferred to the acceptor end of tRNA(Ala). Also edits incorrectly charged Ser-tRNA(Ala) and Gly-tRNA(Ala) via its editing domain. This Streptococcus thermophilus (strain CNRZ 1066) protein is Alanine--tRNA ligase.